The sequence spans 96 residues: Putative pterin-4-alpha-carbinolamine dehydratase (96 aa).

This sequence belongs to the pterin-4-alpha-carbinolamine dehydratase family.

It carries out the reaction (4aS,6R)-4a-hydroxy-L-erythro-5,6,7,8-tetrahydrobiopterin = (6R)-L-erythro-6,7-dihydrobiopterin + H2O. The protein is Putative pterin-4-alpha-carbinolamine dehydratase of Brucella anthropi (strain ATCC 49188 / DSM 6882 / CCUG 24695 / JCM 21032 / LMG 3331 / NBRC 15819 / NCTC 12168 / Alc 37) (Ochrobactrum anthropi).